The chain runs to 327 residues: Tryptophan--tRNA ligase (327 aa).

ATP-binding positions include 9–11 and 17–18; these read QPS and GN. Positions 10 to 18 match the 'HIGH' region motif; the sequence is PSGDIHIGN. Asp132 serves as a coordination point for L-tryptophan. ATP-binding positions include 144 to 146, Ile183, and 192 to 196; these read GED and KMSKS. The 'KMSKS' region signature appears at 192 to 196; sequence KMSKS.

The protein belongs to the class-I aminoacyl-tRNA synthetase family. In terms of assembly, homodimer.

It is found in the cytoplasm. The enzyme catalyses tRNA(Trp) + L-tryptophan + ATP = L-tryptophyl-tRNA(Trp) + AMP + diphosphate + H(+). Catalyzes the attachment of tryptophan to tRNA(Trp). The polypeptide is Tryptophan--tRNA ligase (Caldanaerobacter subterraneus subsp. tengcongensis (strain DSM 15242 / JCM 11007 / NBRC 100824 / MB4) (Thermoanaerobacter tengcongensis)).